The chain runs to 359 residues: Probable dual-specificity RNA methyltransferase RlmN (359 aa).

Glu-91 acts as the Proton acceptor in catalysis. Residues 97 to 329 enclose the Radical SAM core domain; the sequence is QHYGHSVCVT…KKNGVNCVVR (233 aa). Cys-104 and Cys-340 are joined by a disulfide. [4Fe-4S] cluster contacts are provided by Cys-111, Cys-115, and Cys-118. S-adenosyl-L-methionine is bound by residues 163–164, Ser-195, 218–220, and Asn-296; these read GE and SLH. Residue Cys-340 is the S-methylcysteine intermediate of the active site.

It belongs to the radical SAM superfamily. RlmN family. [4Fe-4S] cluster serves as cofactor.

The protein localises to the cytoplasm. The enzyme catalyses adenosine(2503) in 23S rRNA + 2 reduced [2Fe-2S]-[ferredoxin] + 2 S-adenosyl-L-methionine = 2-methyladenosine(2503) in 23S rRNA + 5'-deoxyadenosine + L-methionine + 2 oxidized [2Fe-2S]-[ferredoxin] + S-adenosyl-L-homocysteine. It catalyses the reaction adenosine(37) in tRNA + 2 reduced [2Fe-2S]-[ferredoxin] + 2 S-adenosyl-L-methionine = 2-methyladenosine(37) in tRNA + 5'-deoxyadenosine + L-methionine + 2 oxidized [2Fe-2S]-[ferredoxin] + S-adenosyl-L-homocysteine. In terms of biological role, specifically methylates position 2 of adenine 2503 in 23S rRNA and position 2 of adenine 37 in tRNAs. The sequence is that of Probable dual-specificity RNA methyltransferase RlmN from Streptococcus pyogenes serotype M18 (strain MGAS8232).